Consider the following 1013-residue polypeptide: Nucleotide-binding oligomerization domain-containing protein 2 (1013 aa).

CARD domains follow at residues 1-82 (MCSQ…AVQE) and 107-178 (LQSH…HVQK). An ATG16L1-binding motif motif is present at residues 36-50 (WEVLSWEDYEGLRLV). ADP-binding residues include T212, Y225, T226, G275, S276, G277, K278, S279, and T280. The segment at 214–247 (DGAENLCLEDIYTENTLEVRTEVGMAGPLHKSPA) is required for CARD9 binding. The region spanning 266 to 402 (DTVLVVGEAG…RKVLTSRPDA (137 aa)) is the NACHT domain. Position 272-279 (272-279 (GEAGSGKS)) interacts with ATP. C368 is lipidated: S-palmitoyl cysteine. H576 is an ADP binding site. 9 LRR repeats span residues 764-785 (RPVA…QLLP), 789-812 (ACKA…IEHA), 817-838 (QLQK…SVAQ), 845-857 (NFLA…NHIT), 873-893 (SLQF…QALA), 901-922 (SLKW…ALAS), 929-949 (ALEE…CSLA), 957-978 (SLKV…ALLQ), and 985-1005 (TILE…EALS).

Belongs to the NOD1-NOD2 family. As to quaternary structure, homooligomer: homooligomerizes following muramyl dipeptide (MDP)-binding, promoting RIPK2 recruitment. Interacts (via CARD domain) with RIPK2 (via CARD domain). Following RIPK2 recruitment, RIPK2 homooligomerizes via its CARD domain and forms long filaments named RIPosomes. Interacts (via CARD domain) with ubiquitin; inhibiting interaction with RIPK2. Component of a signaling complex consisting of ARHGEF2, NOD2 and RIPK2. Interacts with ANKRD17 (via N-terminus). Interacts with HSPA1A; the interaction enhances NOD2 stability. Interacts (via both CARD domains) with HSP90; the interaction enhances NOD2 stability. Interacts (via CARD domain) with SOCS3; the interaction promotes NOD2 degradation. Interacts (via CARD domain) with ERBIN; the interaction inhibits activation of NOD2. Interacts with MAPKBP1; the interaction is enhanced in the presence of muramyl dipeptide (MDP) and inhibits NOD2 homooligomerization and activation. Interacts with INAVA; the interaction takes place upon Pattern recognition receptor (PRR) stimulation. Interacts (via NACHT domain) with CARD9. Interacts (via CARD domain) with CASP1; this interaction leads to IL1B processing. Also interacts with CASP4. Interacts with NLRP1; this interaction is enhanced in the presence of muramyl dipeptide (MDP) and leads to increased IL1B release. Interacts with NLRP12; this interaction promotes degradation of NOD2 through the ubiquitin-proteasome pathway. Interacts with ANKHD1, C10orf67, CHMP5, DOCK7, ENTR1, KRT15, LDOC1, PPP1R12C, PPP2R3B, TRIM41 and VIM. Interacts with MAVS; interaction takes place following single-stranded RNA (ssRNA)-binding. Interacts with ATG16L1. Interacts with IRGM; promoting IRGM 'Lys-63'-linked polyubiquitination, which is required for interactions with the core autophagy factors. Palmitoylated by ZDHHC5; palmitoylation is required for proper recruitment to the bacterial entry site and hence for proper signaling upon cognate peptidoglycan detection. Palmitoylation promotes localization to the cell membrane. Palmitoylation protects from SQSTM1/p62-dependent autophagic degradation. In terms of processing, polyubiquitinated by TRIM27, leading to proteasome-mediated degradation. Polyubiquitinated and degraded following muramyl dipeptide (MDP) stimulation, conferring MDP tolerance and preventing septic shock. Post-translationally, degraded via selective autophagy following interaction with IRGM. IRGM promotes NOD2-RIPK2 RIPosome recruitment to autophagosome membranes, promoting their SQSTM1/p62-dependent autophagic degradation. O-glycosylated by OGT, O-GlcNAcylation increases protein stability.

Its subcellular location is the cell membrane. It localises to the basolateral cell membrane. The protein localises to the cytoplasm. The protein resides in the mitochondrion. Its activity is regulated as follows. ADP-binding promotes an inactive closed conformation. Its function is as follows. Pattern recognition receptor (PRR) that detects bacterial peptidoglycan fragments and other danger signals and plays an important role in gastrointestinal immunity. Specifically activated by muramyl dipeptide (MDP), a fragment of bacterial peptidoglycan found in every bacterial peptidoglycan type. NOD2 specifically recognizes and binds 6-O-phospho-MDP, the phosphorylated form of MDP, which is generated by NAGK. 6-O-phospho-MDP-binding triggers oligomerization that facilitates the binding and subsequent activation of the proximal adapter receptor-interacting RIPK2. Following recruitment, RIPK2 undergoes 'Met-1'- (linear) and 'Lys-63'-linked polyubiquitination by E3 ubiquitin-protein ligases XIAP, BIRC2, BIRC3 and the LUBAC complex, becoming a scaffolding protein for downstream effectors, triggering activation of the NF-kappa-B and MAP kinases signaling. This in turn leads to the transcriptional activation of hundreds of genes involved in immune response. Its ability to detect bacterial MDP plays a central role in maintaining the equilibrium between intestinal microbiota and host immune responses to control inflammation. An imbalance in this relationship results in dysbiosis, whereby pathogenic bacteria prevail on commensals, causing damage in the intestinal epithelial barrier as well as allowing bacterial invasion and inflammation. Acts as a regulator of appetite by sensing MDP in a subset of brain neurons: microbiota-derived MDP reach the brain, where they bind and activate NOD2 in inhibitory hypothalamic neurons, decreasing neuronal activity, thereby regulating satiety and body temperature. NOD2-dependent MDP-sensing of bacterial cell walls in the intestinal epithelial compartment contributes to sustained postnatal growth upon undernutrition. Also plays a role in antiviral response by acting as a sensor of single-stranded RNA (ssRNA) from viruses: upon ssRNA-binding, interacts with MAVS, leading to activation of interferon regulatory factor-3/IRF3 and expression of type I interferon. Also acts as a regulator of autophagy in dendritic cells via its interaction with ATG16L1, possibly by recruiting ATG16L1 at the site of bacterial entry. NOD2 activation in the small intestine crypt also contributes to intestinal stem cells survival and function: acts by promoting mitophagy via its association with ATG16L1. In addition to its main role in innate immunity, also regulates the adaptive immune system by acting as regulator of helper T-cell and regulatory T-cells (Tregs). Besides recognizing pathogens, also involved in the endoplasmic reticulum stress response: acts by sensing and binding to the cytosolic metabolite sphingosine-1-phosphate generated in response to endoplasmic reticulum stress, initiating an inflammation process that leads to activation of the NF-kappa-B and MAP kinases signaling. May also be involved in NLRP1 activation following activation by MDP, leading to CASP1 activation and IL1B release in macrophages. The protein is Nucleotide-binding oligomerization domain-containing protein 2 of Oryctolagus cuniculus (Rabbit).